A 171-amino-acid chain; its full sequence is uncharacterized protein (171 aa).

A signal peptide spans 1–18; the sequence is MRYSKLTMLIPCALLLSA. Cysteine 19 carries N-palmitoyl cysteine lipidation. The S-diacylglycerol cysteine moiety is linked to residue cysteine 19.

It localises to the cell membrane. This is an uncharacterized protein from Escherichia coli (strain K12).